The sequence spans 140 residues: Small ribosomal subunit protein uS12 (140 aa).

Aspartate 102 carries the 3-methylthioaspartic acid modification.

It belongs to the universal ribosomal protein uS12 family. In terms of assembly, part of the 30S ribosomal subunit. Contacts proteins S8 and S17. May interact with IF1 in the 30S initiation complex.

Its function is as follows. With S4 and S5 plays an important role in translational accuracy. In terms of biological role, interacts with and stabilizes bases of the 16S rRNA that are involved in tRNA selection in the A site and with the mRNA backbone. Located at the interface of the 30S and 50S subunits, it traverses the body of the 30S subunit contacting proteins on the other side and probably holding the rRNA structure together. The combined cluster of proteins S8, S12 and S17 appears to hold together the shoulder and platform of the 30S subunit. This is Small ribosomal subunit protein uS12 from Geobacillus stearothermophilus (Bacillus stearothermophilus).